The following is a 143-amino-acid chain: Large ribosomal subunit protein bL17 (143 aa).

This sequence belongs to the bacterial ribosomal protein bL17 family. Part of the 50S ribosomal subunit. Contacts protein L32.

The sequence is that of Large ribosomal subunit protein bL17 from Bartonella quintana (strain Toulouse) (Rochalimaea quintana).